Here is a 268-residue protein sequence, read N- to C-terminus: Aliphatic sulfonates import ATP-binding protein SsuB (268 aa).

Residues 15–236 (LAVRNLQKTF…VRGSHRLAAL (222 aa)) form the ABC transporter domain. Residue 47 to 54 (GRSGCGKS) coordinates ATP.

It belongs to the ABC transporter superfamily. Aliphatic sulfonates importer (TC 3.A.1.17.2) family. The complex is composed of two ATP-binding proteins (SsuB), two transmembrane proteins (SsuC) and a solute-binding protein (SsuA).

The protein localises to the cell inner membrane. The catalysed reaction is ATP + H2O + aliphatic sulfonate-[sulfonate-binding protein]Side 1 = ADP + phosphate + aliphatic sulfonateSide 2 + [sulfonate-binding protein]Side 1.. Its function is as follows. Part of the ABC transporter complex SsuABC involved in aliphatic sulfonates import. Responsible for energy coupling to the transport system. This is Aliphatic sulfonates import ATP-binding protein SsuB from Pseudomonas fluorescens (strain Pf0-1).